The sequence spans 305 residues: Cytochrome c biogenesis protein CcsA (305 aa).

Transmembrane regions (helical) follow at residues 11–31 (ANAS…KAIF), 36–56 (ILQL…ALLL), 75–95 (LMFL…YIQI), 97–117 (FIGF…TFFL), 142–162 (IMMA…AFLF), 212–232 (TIGI…VWAN), 239–259 (WSWD…AIYL), and 273–293 (AIVA…VNLL).

Belongs to the CcmF/CycK/Ccl1/NrfE/CcsA family. As to quaternary structure, may interact with Ccs1.

It is found in the plastid. Its subcellular location is the chloroplast thylakoid membrane. Its function is as follows. Required during biogenesis of c-type cytochromes (cytochrome c6 and cytochrome f) at the step of heme attachment. In Mesostigma viride (Green alga), this protein is Cytochrome c biogenesis protein CcsA.